Reading from the N-terminus, the 383-residue chain is Aliphatic nitrilase (383 aa).

Residues 13–288 (VKVATVQAEP…EGLLYAELDL (276 aa)) form the CN hydrolase domain. The Proton acceptor role is filled by Glu53. Catalysis depends on Lys136, which acts as the Proton donor. The Nucleophile role is filled by Cys170. The segment at 359-383 (ATLPLDAPAPAPAPEQKSGRAKAEA) is disordered.

The protein belongs to the carbon-nitrogen hydrolase superfamily. Nitrilase family.

It catalyses the reaction an aliphatic nitrile + 2 H2O = a carboxylate + NH4(+). Its function is as follows. Acts on aliphatic nitriles such as acrylonitrile, crotononitrile and glutaronitrile. The protein is Aliphatic nitrilase of Rhodococcus rhodochrous.